We begin with the raw amino-acid sequence, 268 residues long: Thiazole synthase (268 aa).

Lys-108 functions as the Schiff-base intermediate with DXP in the catalytic mechanism. Residues Gly-169, 195 to 196 (AG), and 217 to 218 (NS) each bind 1-deoxy-D-xylulose 5-phosphate. The segment at 248-268 (RLKENPLASPSSPLEGVISNN) is disordered. Over residues 255 to 268 (ASPSSPLEGVISNN) the composition is skewed to polar residues.

Belongs to the ThiG family. In terms of assembly, homotetramer. Forms heterodimers with either ThiH or ThiS.

It localises to the cytoplasm. It carries out the reaction [ThiS sulfur-carrier protein]-C-terminal-Gly-aminoethanethioate + 2-iminoacetate + 1-deoxy-D-xylulose 5-phosphate = [ThiS sulfur-carrier protein]-C-terminal Gly-Gly + 2-[(2R,5Z)-2-carboxy-4-methylthiazol-5(2H)-ylidene]ethyl phosphate + 2 H2O + H(+). It functions in the pathway cofactor biosynthesis; thiamine diphosphate biosynthesis. In terms of biological role, catalyzes the rearrangement of 1-deoxy-D-xylulose 5-phosphate (DXP) to produce the thiazole phosphate moiety of thiamine. Sulfur is provided by the thiocarboxylate moiety of the carrier protein ThiS. In vitro, sulfur can be provided by H(2)S. The protein is Thiazole synthase of Prochlorococcus marinus (strain NATL1A).